Here is a 262-residue protein sequence, read N- to C-terminus: 3-deoxy-manno-octulosonate cytidylyltransferase (262 aa).

This sequence belongs to the KdsB family.

It localises to the cytoplasm. It carries out the reaction 3-deoxy-alpha-D-manno-oct-2-ulosonate + CTP = CMP-3-deoxy-beta-D-manno-octulosonate + diphosphate. It functions in the pathway nucleotide-sugar biosynthesis; CMP-3-deoxy-D-manno-octulosonate biosynthesis; CMP-3-deoxy-D-manno-octulosonate from 3-deoxy-D-manno-octulosonate and CTP: step 1/1. It participates in bacterial outer membrane biogenesis; lipopolysaccharide biosynthesis. Its function is as follows. Activates KDO (a required 8-carbon sugar) for incorporation into bacterial lipopolysaccharide in Gram-negative bacteria. The chain is 3-deoxy-manno-octulosonate cytidylyltransferase from Koribacter versatilis (strain Ellin345).